A 296-amino-acid chain; its full sequence is 33 kDa chaperonin (296 aa).

Cystine bridges form between cysteine 236-cysteine 238 and cysteine 269-cysteine 272.

It belongs to the HSP33 family. Post-translationally, under oxidizing conditions two disulfide bonds are formed involving the reactive cysteines. Under reducing conditions zinc is bound to the reactive cysteines and the protein is inactive.

Its subcellular location is the cytoplasm. In terms of biological role, redox regulated molecular chaperone. Protects both thermally unfolding and oxidatively damaged proteins from irreversible aggregation. Plays an important role in the bacterial defense system toward oxidative stress. The protein is 33 kDa chaperonin of Lactobacillus helveticus (strain DPC 4571).